Reading from the N-terminus, the 809-residue chain is Ecotropic viral integration site 5 protein (809 aa).

The interaction with alpha-tubulin, gamma-tubulin, BIRC5 and FBXO5 stretch occupies residues 1-483 (MVTTKMTAAF…EAESQCALKE (483 aa)). 2 disordered regions span residues 49–80 (VASPSASLHTTSSSTTLSTPTQSPSSPSKLSP) and 99–123 (DSKSLRSVNGSRRNSGSSLVSSSSA). Residues 51–78 (SPSASLHTTSSSTTLSTPTQSPSSPSKL) show a composition bias toward low complexity. Phosphoserine occurs at positions 102 and 113. Positions 103–123 (LRSVNGSRRNSGSSLVSSSSA) are enriched in low complexity. The segment at 128 to 693 (SHLEEDSWIL…LNRSDSNQYI (566 aa)) is dimerization. One can recognise a Rab-GAP TBC domain in the interval 163-348 (GIPHHFRAIV…RIFDIFMSEG (186 aa)). The segment at 377–809 (QHFQKVIPHQ…PQRESYSTTV (433 aa)) is targeting to the centrosomes. Residues 406–717 (KKMKKLEKEY…RCLKGQRDFS (312 aa)) are a coiled coil. Residues 487–809 (KVLDIEKKNN…PQRESYSTTV (323 aa)) form an interaction with AURKB and INCENP region. Residues Ser497, Ser689, Ser776, and Ser778 each carry the phosphoserine modification. A disordered region spans residues 760 to 809 (HRKSGPMSLNPALADGSESEAEDGMLGPQESDPEAPQKQPPQRESYSTTV). The span at 799–809 (PPQRESYSTTV) shows a compositional bias: polar residues.

Dimeric and monomeric. Interacts with alpha- and gamma-tubulin. Interacts with FBXO5. Interacts with the chromosome passenger complex (CPC) which is at least composed of AURKB/aurora-B, BIRC5/survivin, CDCA8/borealin and INCENP. Post-translationally, probably phosphorylated by PLK1; may be required for degradation during mitosis. Ubiquitinated. Degradation during prophase is ubiquitin-dependent. In terms of tissue distribution, widely expressed.

It is found in the nucleus. It localises to the cytoplasm. The protein localises to the cytoskeleton. The protein resides in the microtubule organizing center. Its subcellular location is the centrosome. It is found in the spindle. In terms of biological role, functions as a regulator of cell cycle progression by stabilizing the FBXO5 protein and promoting cyclin-A accumulation during interphase. May play a role in cytokinesis. This is Ecotropic viral integration site 5 protein (Evi5) from Mus musculus (Mouse).